The chain runs to 861 residues: Leucine--tRNA ligase (861 aa).

The short motif at 42–52 (PYPSGRLHMGH) is the 'HIGH' region element. Positions 619–623 (KMSKS) match the 'KMSKS' region motif. ATP is bound at residue Lys-622.

The protein belongs to the class-I aminoacyl-tRNA synthetase family.

It localises to the cytoplasm. It catalyses the reaction tRNA(Leu) + L-leucine + ATP = L-leucyl-tRNA(Leu) + AMP + diphosphate. The sequence is that of Leucine--tRNA ligase from Haemophilus influenzae (strain ATCC 51907 / DSM 11121 / KW20 / Rd).